The primary structure comprises 314 residues: MRFKGLDLNLLVVLDALMTERNLTAAARSINLSQPAMSAAVARLRTNFRDDLFAMAGREFIPTPRAEGLAPAVRDALLQIQLSIVSWEPFNPAQSDRRFRIVLSDYVTLVFFEKVVARAAQEAPGISFDCLPLADDFEELLRRGDIDFLIMPELFMSMHPHAALFEDKFVCVGCRTNEQLSEPFTFERYMSMGHVAVKFGNTRRPTIEEWYLLEHGLKRRIEVVVQGFSMIPPMLSGTERIGTMPLRLAQHFAKTIPLRIVELPLPIPPLAEAVQWPALHNSDPASLWMRELLLQEASLMVSPRAPVRLSAPGF.

The 58-residue stretch at 6-63 folds into the HTH lysR-type domain; sequence LDLNLLVVLDALMTERNLTAAARSINLSQPAMSAAVARLRTNFRDDLFAMAGREFIPT. A DNA-binding region (H-T-H motif) is located at residues 23–42; it reads LTAAARSINLSQPAMSAAVA.

Belongs to the LysR transcriptional regulatory family.

Functionally, nodD regulates the expression of the nodABCFE genes which encode other nodulation proteins. NodD is also a negative regulator of its own expression. Binds flavonoids as inducers. The polypeptide is Nodulation protein D 2 (nodD2) (Rhizobium tropici).